A 78-amino-acid chain; its full sequence is DNA-directed RNA polymerase subunit Rpo5 (78 aa).

The protein belongs to the archaeal Rpo5/eukaryotic RPB5 RNA polymerase subunit family. Part of the RNA polymerase complex.

It is found in the cytoplasm. It catalyses the reaction RNA(n) + a ribonucleoside 5'-triphosphate = RNA(n+1) + diphosphate. In terms of biological role, DNA-dependent RNA polymerase (RNAP) catalyzes the transcription of DNA into RNA using the four ribonucleoside triphosphates as substrates. The protein is DNA-directed RNA polymerase subunit Rpo5 of Methanococcus vannielii (strain ATCC 35089 / DSM 1224 / JCM 13029 / OCM 148 / SB).